Reading from the N-terminus, the 240-residue chain is Ribonuclease 3 (240 aa).

The RNase III domain occupies Asp13–Gly143. Glu53 serves as a coordination point for Mg(2+). Asp57 is a catalytic residue. Positions 129 and 132 each coordinate Mg(2+). Residue Glu132 is part of the active site. The 69-residue stretch at Asp170–Ala238 folds into the DRBM domain.

It belongs to the ribonuclease III family. In terms of assembly, homodimer. The cofactor is Mg(2+).

The protein resides in the cytoplasm. The catalysed reaction is Endonucleolytic cleavage to 5'-phosphomonoester.. In terms of biological role, digests double-stranded RNA. Involved in the processing of primary rRNA transcript to yield the immediate precursors to the large and small rRNAs (23S and 16S). Processes some mRNAs, and tRNAs when they are encoded in the rRNA operon. Processes pre-crRNA and tracrRNA of type II CRISPR loci if present in the organism. This Nocardia farcinica (strain IFM 10152) protein is Ribonuclease 3.